The chain runs to 192 residues: Large ribosomal subunit protein bL9 (192 aa).

A disordered region spans residues 172–192 (DALRPEDFFDPEADGVDEDEA). The segment covering 179–192 (FFDPEADGVDEDEA) has biased composition (acidic residues).

It belongs to the bacterial ribosomal protein bL9 family.

Its function is as follows. Binds to the 23S rRNA. The chain is Large ribosomal subunit protein bL9 from Rhizobium leguminosarum bv. trifolii (strain WSM2304).